Here is a 443-residue protein sequence, read N- to C-terminus: Thymidine phosphorylase (443 aa).

Belongs to the thymidine/pyrimidine-nucleoside phosphorylase family. Homodimer.

It catalyses the reaction thymidine + phosphate = 2-deoxy-alpha-D-ribose 1-phosphate + thymine. It participates in pyrimidine metabolism; dTMP biosynthesis via salvage pathway; dTMP from thymine: step 1/2. Functionally, the enzymes which catalyze the reversible phosphorolysis of pyrimidine nucleosides are involved in the degradation of these compounds and in their utilization as carbon and energy sources, or in the rescue of pyrimidine bases for nucleotide synthesis. This Shewanella baltica (strain OS185) protein is Thymidine phosphorylase.